Consider the following 210-residue polypeptide: Pyridoxine/pyridoxamine 5'-phosphate oxidase (210 aa).

Substrate-binding positions include 7 to 10 (RDEY) and lysine 65. FMN contacts are provided by residues 60 to 65 (RMVLLK), 75 to 76 (FT), arginine 81, lysine 82, and glutamine 104. Substrate-binding residues include tyrosine 122, arginine 126, and serine 130. Residues 139-140 (QS) and tryptophan 183 contribute to the FMN site. 189–191 (RLH) provides a ligand contact to substrate. Arginine 193 is an FMN binding site.

It belongs to the pyridoxamine 5'-phosphate oxidase family. As to quaternary structure, homodimer. FMN serves as cofactor.

It catalyses the reaction pyridoxamine 5'-phosphate + O2 + H2O = pyridoxal 5'-phosphate + H2O2 + NH4(+). The catalysed reaction is pyridoxine 5'-phosphate + O2 = pyridoxal 5'-phosphate + H2O2. It functions in the pathway cofactor metabolism; pyridoxal 5'-phosphate salvage; pyridoxal 5'-phosphate from pyridoxamine 5'-phosphate: step 1/1. It participates in cofactor metabolism; pyridoxal 5'-phosphate salvage; pyridoxal 5'-phosphate from pyridoxine 5'-phosphate: step 1/1. Functionally, catalyzes the oxidation of either pyridoxine 5'-phosphate (PNP) or pyridoxamine 5'-phosphate (PMP) into pyridoxal 5'-phosphate (PLP). The sequence is that of Pyridoxine/pyridoxamine 5'-phosphate oxidase from Haemophilus influenzae (strain 86-028NP).